Consider the following 133-residue polypeptide: Large ribosomal subunit protein bL12 (133 aa).

The disordered stretch occupies residues 98–118; the sequence is DMVESTPKPIKEGTGKEDAED.

The protein belongs to the bacterial ribosomal protein bL12 family. Homodimer. Part of the ribosomal stalk of the 50S ribosomal subunit. Forms a multimeric L10(L12)X complex, where L10 forms an elongated spine to which 2 to 4 L12 dimers bind in a sequential fashion. Binds GTP-bound translation factors.

In terms of biological role, forms part of the ribosomal stalk which helps the ribosome interact with GTP-bound translation factors. Is thus essential for accurate translation. The protein is Large ribosomal subunit protein bL12 of Crocosphaera subtropica (strain ATCC 51142 / BH68) (Cyanothece sp. (strain ATCC 51142)).